Consider the following 506-residue polypeptide: Gamma-aminobutyric acid receptor subunit epsilon (506 aa).

A signal peptide spans methionine 1–glycine 22. The segment at proline 23–glycine 66 is disordered. At proline 23–valine 280 the chain is on the extracellular side. The N-linked (GlcNAc...) asparagine glycan is linked to asparagine 134. Cysteines 195 and 209 form a disulfide. The N-linked (GlcNAc...) asparagine glycan is linked to asparagine 252. A helical transmembrane segment spans residues alanine 281–isoleucine 301. The Cytoplasmic segment spans residues lysine 302–proline 307. A helical transmembrane segment spans residues alanine 308–serine 327. At arginine 328–tyrosine 343 the chain is on the extracellular side. Residues isoleucine 344–leucine 364 form a helical membrane-spanning segment. Residues isoleucine 365–arginine 485 are Cytoplasmic-facing. The disordered stretch occupies residues glutamate 413–arginine 438. A helical membrane pass occupies residues valine 486–leucine 506.

Belongs to the ligand-gated ion channel (TC 1.A.9) family. Gamma-aminobutyric acid receptor (TC 1.A.9.5) subfamily. GABRE sub-subfamily. Heteropentamer, formed by a combination of alpha (GABRA1-6), beta (GABRB1-3), gamma (GABRG1-3), delta (GABRD), epsilon (GABRE), rho (GABRR1-3), pi (GABRP) and theta (GABRQ) chains, each subunit exhibiting distinct physiological and pharmacological properties. As to expression, expressed in many tissues. Highest levels of expression in adult heart and placenta.

The protein localises to the cell membrane. The protein resides in the postsynaptic cell membrane. The enzyme catalyses chloride(in) = chloride(out). With respect to regulation, potentiated by pentobarbital, loreclezole, and lanthanum and inhibited by zinc and furosemide. Introduction of the epsilon subunit to the receptor complex resulted in diminished modulatory effects by etomidate, propofol, pregnanolone and flurazepam. In terms of biological role, epsilon subunit of the heteropentameric ligand-gated chloride channel gated by gamma-aminobutyric acid (GABA), a major inhibitory neurotransmitter in the brain. GABA-gated chloride channels, also named GABA(A) receptors (GABAAR), consist of five subunits arranged around a central pore and contain GABA active binding site(s) located at the alpha and beta subunit interfaces. When activated by GABA, GABAARs selectively allow the flow of chloride anions across the cell membrane down their electrochemical gradient. GABAARs containing epsilon subunits also permit spontaneous chloride channel activity while preserving the structural information required for GABA-gated openings. GABARs containing epsilon subunit may regulate cardiac function. This chain is Gamma-aminobutyric acid receptor subunit epsilon, found in Homo sapiens (Human).